The chain runs to 713 residues: Ribosomal RNA large subunit methyltransferase K/L (713 aa).

One can recognise a THUMP domain in the interval 46 to 157; the sequence is TAYRICLWSR…RDQATLSLDL (112 aa).

It belongs to the methyltransferase superfamily. RlmKL family.

Its subcellular location is the cytoplasm. It carries out the reaction guanosine(2445) in 23S rRNA + S-adenosyl-L-methionine = N(2)-methylguanosine(2445) in 23S rRNA + S-adenosyl-L-homocysteine + H(+). The enzyme catalyses guanosine(2069) in 23S rRNA + S-adenosyl-L-methionine = N(2)-methylguanosine(2069) in 23S rRNA + S-adenosyl-L-homocysteine + H(+). In terms of biological role, specifically methylates the guanine in position 2445 (m2G2445) and the guanine in position 2069 (m7G2069) of 23S rRNA. The sequence is that of Ribosomal RNA large subunit methyltransferase K/L from Syntrophotalea carbinolica (strain DSM 2380 / NBRC 103641 / GraBd1) (Pelobacter carbinolicus).